Here is a 450-residue protein sequence, read N- to C-terminus: UDP-N-acetylmuramoylalanine--D-glutamate ligase (450 aa).

119 to 125 (GSNGKTT) serves as a coordination point for ATP.

Belongs to the MurCDEF family.

Its subcellular location is the cytoplasm. The enzyme catalyses UDP-N-acetyl-alpha-D-muramoyl-L-alanine + D-glutamate + ATP = UDP-N-acetyl-alpha-D-muramoyl-L-alanyl-D-glutamate + ADP + phosphate + H(+). Its pathway is cell wall biogenesis; peptidoglycan biosynthesis. Functionally, cell wall formation. Catalyzes the addition of glutamate to the nucleotide precursor UDP-N-acetylmuramoyl-L-alanine (UMA). The chain is UDP-N-acetylmuramoylalanine--D-glutamate ligase from Streptococcus pneumoniae (strain CGSP14).